Here is a 268-residue protein sequence, read N- to C-terminus: Proenkephalin-A (268 aa).

Positions 1-24 (MARLLRLCTWLVALGPGLLATVQA) are cleaved as a signal peptide. Cystine bridges form between C26–C48, C30–C52, and C33–C65. The tract at residues 163-184 (TGDDRDRENHHQEGGDSDEGVS) is disordered. Residues 164–176 (GDDRDRENHHQEG) are compositionally biased toward basic and acidic residues. 2 consecutive propeptides follow at residues 197–208 (SPQVEDEAKELQ) and 218–228 (VGRPEWWMDYQ). S252 is modified (phosphoserine).

The protein belongs to the opioid neuropeptide precursor family. Post-translationally, proenkephalin-A is cleaved by CTSL to generate Met-enkephalin. Processed and degraded by ACE. In terms of processing, probably cleaved by ACE. Post-translationally, processed by ACE to generate Met-enkephalin in the nucleus accumbens of the brain. The N-terminal domain contains 6 conserved cysteines thought to be involved in disulfide bonding and/or processing.

The protein localises to the cytoplasmic vesicle. The protein resides in the secretory vesicle. It localises to the chromaffin granule lumen. It is found in the secreted. Functionally, neuropeptide that competes with and mimic the effects of opiate drugs. They play a role in a number of physiologic functions, including pain perception and responses to stress. Met-enkephalin-Arg-Phe neuropeptide acts as a strong ligand of Mu-type opioid receptor OPRM1. Met-enkephalin-Arg-Phe-binding to OPRM1 in the nucleus accumbens of the brain increases activation of OPRM1, leading to long-term synaptic depression of glutamate release. In terms of biological role, increases glutamate release in the striatum and decreases GABA concentration in the striatum. Its function is as follows. Increases glutamate release in the striatum. The chain is Proenkephalin-A (PENK) from Cavia porcellus (Guinea pig).